The primary structure comprises 370 residues: Vasopressin V2 receptor (370 aa).

A compositionally biased stretch (polar residues) spans 1–21 (MFMASTTSAVPWHLSQPTPAG). Positions 1-26 (MFMASTTSAVPWHLSQPTPAGNGSEG) are disordered. Residues 1–38 (MFMASTTSAVPWHLSQPTPAGNGSEGELLTARDPLLAQ) lie on the Extracellular side of the membrane. N22 carries an N-linked (GlcNAc...) asparagine glycan. The chain crosses the membrane as a helical span at residues 39–63 (AELALLSTVFVAVALSNGLVLGALV). The Cytoplasmic portion of the chain corresponds to 64-77 (RRGRRGRWAPMHVF). The chain crosses the membrane as a helical span at residues 78-98 (IGHLCLADLAVALFQVLPQLA). Topologically, residues 99 to 113 (WDATDRFRGPDALCR) are extracellular. A helical transmembrane segment spans residues 114–135 (AVKYLQMVGMYASSYMILAMTL). The Cytoplasmic portion of the chain corresponds to 136-159 (DRHRAICRPMLAHRHGGGTHWNRP). A helical transmembrane segment spans residues 160–180 (VLLAWAFSLLFSLPQLFIFAQ). Residues 181–199 (RDVDGSGVLDCWARFAEPW) lie on the Extracellular side of the membrane. A helical transmembrane segment spans residues 200–219 (GLRAYVTWIALMVFVAPALG). Topologically, residues 220–270 (IAACQVLIFREIHASLGPGPVPRAGGPRRGCRPGSPAEGARVSAAVAKTVK) are cytoplasmic. Residues 271-292 (MTLVIVIVYVLCWAPFFLVQLW) traverse the membrane as a helical segment. At 293 to 307 (AAWDPEAPREGPPFV) the chain is on the extracellular side. The chain crosses the membrane as a helical span at residues 308 to 327 (LLMLLASLNSCTNPWIYASF). Residues 328-370 (SSSISSELRSLLCCTWRRAPPSPGPQEESCATASSFLAKDTPS) lie on the Cytoplasmic side of the membrane. Residues C340 and C341 are each lipidated (S-palmitoyl cysteine). Residues 347-370 (PPSPGPQEESCATASSFLAKDTPS) are disordered.

Belongs to the G-protein coupled receptor 1 family. Vasopressin/oxytocin receptor subfamily. As to quaternary structure, interacts with ARRDC4. Identified in a complex containing at least ARRDC4, V2R and HGS. Interacts with TMEM147.

The protein resides in the cell membrane. In terms of biological role, receptor for arginine vasopressin. The activity of this receptor is mediated by G proteins which activate adenylate cyclase. Involved in renal water reabsorption. The protein is Vasopressin V2 receptor (AVPR2) of Bos taurus (Bovine).